Here is a 150-residue protein sequence, read N- to C-terminus: Putative F-box protein At2g33655 (150 aa).

An F-box domain is found at 1–47 (MEKMSDLPRELVEEILSRVPVKSMREVRVTCKTWNALSKHISKAEAA).

The protein is Putative F-box protein At2g33655 of Arabidopsis thaliana (Mouse-ear cress).